The primary structure comprises 201 residues: Aminoglycoside N(6')-acetyltransferase type 1 (201 aa).

In terms of domain architecture, N-acetyltransferase spans 25-192 (VTLRLMTEHD…PAVYMVQTRQ (168 aa)). Tryptophan 51 and aspartate 154 together coordinate substrate. Residue asparagine 159 coordinates acetyl-CoA.

As to quaternary structure, homodimer.

It carries out the reaction kanamycin B + acetyl-CoA = N(6')-acetylkanamycin B + CoA + H(+). Its function is as follows. Catalyzes the transfer of an acetyl group from acetyl-CoA to the 6'-amino group of aminoglycoside molecules conferring resistance to antibiotics containing the purpurosamine ring including amikacin. The polypeptide is Aminoglycoside N(6')-acetyltransferase type 1 (aacA4) (Klebsiella pneumoniae).